Here is a 384-residue protein sequence, read N- to C-terminus: 8-amino-7-oxononanoate synthase (384 aa).

Arginine 21 contributes to the substrate binding site. 108-109 is a binding site for pyridoxal 5'-phosphate; the sequence is GF. A substrate-binding site is contributed by histidine 133. Pyridoxal 5'-phosphate contacts are provided by serine 179, histidine 207, and threonine 233. At lysine 236 the chain carries N6-(pyridoxal phosphate)lysine. Threonine 352 contributes to the substrate binding site.

Belongs to the class-II pyridoxal-phosphate-dependent aminotransferase family. BioF subfamily. Homodimer. Requires pyridoxal 5'-phosphate as cofactor.

It carries out the reaction 6-carboxyhexanoyl-[ACP] + L-alanine + H(+) = (8S)-8-amino-7-oxononanoate + holo-[ACP] + CO2. It functions in the pathway cofactor biosynthesis; biotin biosynthesis. Its function is as follows. Catalyzes the decarboxylative condensation of pimeloyl-[acyl-carrier protein] and L-alanine to produce 8-amino-7-oxononanoate (AON), [acyl-carrier protein], and carbon dioxide. The chain is 8-amino-7-oxononanoate synthase from Escherichia coli (strain K12 / DH10B).